We begin with the raw amino-acid sequence, 144 residues long: Small ribosomal subunit protein bS16 (144 aa).

Residues 115 to 144 (NEPVAEAVTPKKKAKKDDAAAESTEAEAAE) form a disordered region.

This sequence belongs to the bacterial ribosomal protein bS16 family.

The sequence is that of Small ribosomal subunit protein bS16 from Nocardia farcinica (strain IFM 10152).